The chain runs to 227 residues: 4-nitrobenzoate reductase (227 aa).

15–19 is a binding site for FMN; the sequence is RRAVR. Positions 45, 102, and 107 each coordinate NAD(+). Arg213 serves as a coordination point for FMN.

It belongs to the nitroreductase family. The cofactor is FMN.

The enzyme catalyses 4-nitrobenzoate + 2 NADH + 2 H(+) = 4-hydroxylaminobenzoate + 2 NAD(+) + H2O. Its function is as follows. Nitroreductase involved in the degradation of nitroaromatic compounds. Catalyzes the conversion of 4-nitrobenzoate to 4-hydroxylaminobenzoate. Required for the catabolism of 4-nitrotoluene. In Pseudomonas putida (Arthrobacter siderocapsulatus), this protein is 4-nitrobenzoate reductase.